A 227-amino-acid chain; its full sequence is Ribonuclease S-5 (227 aa).

An N-terminal signal peptide occupies residues 1 to 27 (MGITGMVYVVTMVFLLIVLILSSSTVG). Gln36 is an RNA binding site. Cys42 and Cys49 form a disulfide bridge. An N-linked (GlcNAc...) asparagine glycan is attached at Asn45. RNA is bound by residues His60, 97–98 (NV), Phe107, 110–111 (KE), and 114–115 (KH). The Proton donor role is filled by His60. Residues Cys75 and Cys118 are joined by a disulfide bond. The active site involves Glu111. His115 (proton acceptor) is an active-site residue. N-linked (GlcNAc...) asparagine glycosylation is present at Asn143. Cystine bridges form between Cys182–Cys220 and Cys197–Cys208.

This sequence belongs to the RNase T2 family. N-glycan at Asn-45 consists of disaccharide (GlcNAc-GlcNAc). N-linked core structure at Asn-143 contains xylose.

It catalyses the reaction a ribonucleotidyl-ribonucleotide-RNA + H2O = a 3'-end 3'-phospho-ribonucleotide-RNA + a 5'-end dephospho-ribonucleoside-RNA + H(+). In terms of biological role, self-incompatibility (SI) is the inherited ability of a flowering plant to prevent self-fertilization by discriminating between self and non-self pollen during pollination. In many species, self-incompatibility is controlled by the single, multiallelic locus S. This Pyrus pyrifolia (Chinese pear) protein is Ribonuclease S-5.